We begin with the raw amino-acid sequence, 562 residues long: Extracellular matrix protein 1 (562 aa).

The first 19 residues, 1–19 (MGTIRSSALILACLALASA), serve as a signal peptide directing secretion. Disordered stretches follow at residues 46–87 (GYAA…SSPE) and 119–171 (QKEQ…WNPA). A compositionally biased stretch (basic and acidic residues) spans 129 to 154 (IEQKEIDPPVQHQEEIVQSRQKEEKP). Tandem repeats lie at residues 172-301 (RHCQ…RPDY) and 305-427 (PCPI…YPNY). The interval 172 to 427 (RHCQQGRRGI…FAHLAPYPNY (256 aa)) is 2 X approximate repeats. 3 N-linked (GlcNAc...) asparagine glycosylation sites follow: Asn-376, Asn-466, and Asn-538. A disordered region spans residues 539–562 (ATGLGQQGPTGGTNVGPAPGSKEE). The span at 543 to 552 (GQQGPTGGTN) shows a compositional bias: gly residues. Ser-559 bears the Phosphoserine mark.

Interacts (via C-terminus) with HSPG2 (via C-terminus). Interacts with EFEMP1/FBLN3 and LAMB3. Interacts with MMP9.

The protein resides in the secreted. Its subcellular location is the extracellular space. It localises to the extracellular matrix. Functionally, involved in endochondral bone formation as negative regulator of bone mineralization. Stimulates the proliferation of endothelial cells and promotes angiogenesis. Inhibits MMP9 proteolytic activity. The polypeptide is Extracellular matrix protein 1 (Ecm1) (Rattus norvegicus (Rat)).